We begin with the raw amino-acid sequence, 219 residues long: Redox-sensing transcriptional repressor Rex (219 aa).

Residues 18–57 constitute a DNA-binding region (H-T-H motif); that stretch reads LYYRFIQSLYNSGKLRVSSAELSEAVKVDSATIRRDFSYF. 92-97 is an NAD(+) binding site; that stretch reads GVGHLG.

This sequence belongs to the transcriptional regulatory Rex family. Homodimer.

Its subcellular location is the cytoplasm. In terms of biological role, modulates transcription in response to changes in cellular NADH/NAD(+) redox state. The sequence is that of Redox-sensing transcriptional repressor Rex from Exiguobacterium sibiricum (strain DSM 17290 / CCUG 55495 / CIP 109462 / JCM 13490 / 255-15).